Here is a 754-residue protein sequence, read N- to C-terminus: DNA N-6-adenine-methyltransferase (754 aa).

The SAM-dependent MTase C5-type domain occupies 4-469; sequence LCYGSVCSGI…DRITKAVCRQ (466 aa). C78 is an active-site residue.

It belongs to the class I-like SAM-binding methyltransferase superfamily. C5-methyltransferase family. As to quaternary structure, homodimer. The cofactor is Mg(2+). Ca(2+) serves as cofactor.

It carries out the reaction a 2'-deoxyadenosine in DNA + S-adenosyl-L-methionine = an N(6)-methyl-2'-deoxyadenosine in DNA + S-adenosyl-L-homocysteine + H(+). In terms of biological role, methyltransferase that methylates adenine residues in the ssDNA and dsDNA sequence 5'-AGACC-3'. Essential for genome packaging because methylation within the pac site makes the latter cleavable. May prevent degradation of viral DNA by the host restriction-modification antiviral defense system. The sequence is that of DNA N-6-adenine-methyltransferase (dmt) from Enterobacteriaceae (Bacteriophage P1).